Reading from the N-terminus, the 197-residue chain is MAKVQVLNVAVLDNPSPFGNPFQFEITFECMEDLPEDLEWKIIYVGSAESEEYDQTLDSVLVGPVPAGRHMFVFQADAPNCSLIPETDAVGVTVVLITCTYRGQEFIRIGYYVNNEYTDTELRENPPLKPNYGQLQRNILASNPRVTRFHINWEGCAEKMEDSENVDPAPNAMLPPSCTPGKAPLLGLVPDNSMDCL.

It belongs to the ASF1 family. In terms of assembly, interacts with histone H3 and histone H4.

It is found in the nucleus. In terms of biological role, histone chaperone that facilitates histone deposition and histone exchange and removal during nucleosome assembly and disassembly. This Danio rerio (Zebrafish) protein is Histone chaperone asf1b-A (asf1ba).